We begin with the raw amino-acid sequence, 366 residues long: Growth hormone secretagogue receptor type 1 (366 aa).

The Extracellular segment spans residues 1-40 (MWNATPSEEPGPNLTLPDLGWDAPPENDSLVEELLPLFPT). Asn13 and Asn27 each carry an N-linked (GlcNAc...) asparagine glycan. A helical transmembrane segment spans residues 41-66 (PLLAGVTATCVALFVVGIAGNLLTML). Over 67–72 (VVSRFR) the chain is Cytoplasmic. Residues 73-96 (EMRTTTNLYLSSMAFSDLLIFLCM) form a helical membrane-spanning segment. Over 97-117 (PLDLFRLWQYRPWNLGNLLCK) the chain is Extracellular. Cys116 and Cys198 are disulfide-bonded. Residues 118–139 (LFQFVSESCTYATVLTITALSV) traverse the membrane as a helical segment. The Cytoplasmic portion of the chain corresponds to 140–162 (ERYFAICFPLRAKVVVTKGRVKL). The chain crosses the membrane as a helical span at residues 163-183 (VILVIWAVAFCSAGPIFVLVG). Over 184–211 (VEHDNGTDPRDTNECRATEFAVRSGLLT) the chain is Extracellular. A helical membrane pass occupies residues 212–235 (VMVWVSSVFFFLPVFCLTVLYSLI). Residues 236 to 263 (GRKLWRRKRGEAAVGSSLRDQNHKQTVK) are Cytoplasmic-facing. Residues 264-285 (MLAVVVFAFILCWLPFHVGRYL) traverse the membrane as a helical segment. The Extracellular portion of the chain corresponds to 286–302 (FSKSLEPGSVEIAQISQ). The helical transmembrane segment at 303-326 (YCNLVSFVLFYLSAAINPILYNIM) threads the bilayer. Over 327-366 (SKKYRVAVFKLLGFEPFSQRKLSTLKDESSRAWTESSINT) the chain is Cytoplasmic.

It belongs to the G-protein coupled receptor 1 family. As to expression, pituitary and hypothalamus.

The protein resides in the cell membrane. Its function is as follows. Receptor for ghrelin, coupled to G-alpha-11 proteins. Stimulates growth hormone secretion. Also binds other growth hormone releasing peptides (GHRP) (e.g. Met-enkephalin and GHRP-6) as well as non-peptide, low molecular weight secretagogues (e.g. L-692,429, MK-0677, adenosine). This is Growth hormone secretagogue receptor type 1 (GHSR) from Sus scrofa (Pig).